Consider the following 1035-residue polypeptide: Retinoblastoma-related protein (1035 aa).

Positions Ile403–Ser426 are disordered. The interval Thr431–Leu632 is domain A. The pocket stretch occupies residues Thr431 to Pro885. The tract at residues Thr633–Glu753 is spacer. Disordered regions lie at residues Pro674 to Pro697 and Gly721 to Gly748. The interval Thr754–Pro885 is domain B.

This sequence belongs to the retinoblastoma protein (RB) family.

It localises to the nucleus. Its function is as follows. Regulator of biological processes that recruits a histone deacetylase to control gene transcription. May play a role in the entry into mitosis, negatively regulating the cell proliferation. Formation of stable complexes with geminiviridae replication-associated proteins may create a cellular environment which favors viral DNA replication. In Populus trichocarpa (Western balsam poplar), this protein is Retinoblastoma-related protein (RBL901).